The primary structure comprises 304 residues: Quinolinate synthase (304 aa).

Positions 23 and 40 each coordinate iminosuccinate. Residue C85 participates in [4Fe-4S] cluster binding. Iminosuccinate is bound by residues 111 to 113 and S128; that span reads YIN. C171 is a binding site for [4Fe-4S] cluster. Iminosuccinate contacts are provided by residues 197 to 199 and T214; that span reads HPE. A [4Fe-4S] cluster-binding site is contributed by C259.

This sequence belongs to the quinolinate synthase family. Type 2 subfamily. The cofactor is [4Fe-4S] cluster.

The protein resides in the cytoplasm. It catalyses the reaction iminosuccinate + dihydroxyacetone phosphate = quinolinate + phosphate + 2 H2O + H(+). Its pathway is cofactor biosynthesis; NAD(+) biosynthesis; quinolinate from iminoaspartate: step 1/1. Functionally, catalyzes the condensation of iminoaspartate with dihydroxyacetone phosphate to form quinolinate. In Clostridioides difficile (strain 630) (Peptoclostridium difficile), this protein is Quinolinate synthase.